The sequence spans 994 residues: Translocase of chloroplast 108, chloroplastic (994 aa).

Disordered stretches follow at residues 14–61 (KEAS…EDEP), 84–124 (TTDL…DPSV), and 152–287 (AVDG…DETR). Composition is skewed to polar residues over residues 37-53 (GETT…ANES) and 84-98 (TTDL…TPSN). Over residues 99 to 121 (AEKESPEATEVRIVEEGKLEKAD) the composition is skewed to basic and acidic residues. Residues 166-197 (NDGDTDANTADEDNENDEDDVDEDEDEDDADM) are compositionally biased toward acidic residues. The segment covering 249–268 (ASDSPGRNTQRPNGALSTQI) has biased composition (polar residues). The span at 269–280 (TSTTDESASSDA) shows a compositional bias: low complexity. The AIG1-type G domain maps to 360–589 (DFACTILVLG…KLQETTAPGR (230 aa)). Residues 369-376 (GKTGVGKS) form a G1 region. 372–377 (GVGKSS) contacts GTP. Serine 376 is a Mg(2+) binding site. Residues 395–399 (PSTNK) form a G2 region. Positions 416 to 419 (DTPG) are G3. The tract at residues 488–491 (THAS) is G4. Residues histidine 489 and 537–538 (EN) each bind GTP. The tract at residues 537–539 (ENH) is G5. Disordered stretches follow at residues 616–659 (LPDE…EDLT) and 691–716 (EAKK…EAGN). Over residues 620–643 (QAGESDESDDDEEEEDSDADDYDE) the composition is skewed to acidic residues. Basic and acidic residues predominate over residues 650–659 (LSKEELEDLT). Residues 705–714 (AEAEEAEDEA) are compositionally biased toward acidic residues. Residues 969–989 (MVLIGIVPILRSLINCRFGFG) form a helical membrane-spanning segment.

The protein belongs to the TRAFAC class TrmE-Era-EngA-EngB-Septin-like GTPase superfamily. AIG1/Toc34/Toc159-like paraseptin GTPase family. TOC159 subfamily. As to quaternary structure, part of the TOC core complex. Mg(2+) serves as cofactor.

It is found in the plastid. The protein localises to the chloroplast outer membrane. GTPase involved in protein precursor import into chloroplasts. Seems to recognize chloroplast-destined precursor proteins and regulate their presentation to the translocation channel through GTP hydrolysis. Probably specialized in the import of nuclear encoded non-photosynthetic preproteins from the cytoplasm to the chloroplast. The chain is Translocase of chloroplast 108, chloroplastic from Physcomitrium patens (Spreading-leaved earth moss).